Reading from the N-terminus, the 320-residue chain is Very-long-chain 3-oxoacyl-CoA reductase (320 aa).

Residues 17-37 traverse the membrane as a helical segment; that stretch reads FWYLGVVAAVWWGLRAAWCLL. 56-85 is a binding site for NADP(+); the sequence is GKWAVVTGATDGIGKAYAEELAKRGMNIVL. A run of 2 helical transmembrane segments spans residues 189–209 and 283–303; these read GVILNISSASGMYPVPLLTVY and AIMGWISTSLVPVSTAISLGM. Serine 196 contacts substrate. The active-site Proton acceptor is tyrosine 209.

The protein belongs to the short-chain dehydrogenases/reductases (SDR) family. 17-beta-HSD 3 subfamily.

The protein resides in the endoplasmic reticulum membrane. It catalyses the reaction a very-long-chain (3R)-3-hydroxyacyl-CoA + NADP(+) = a very-long-chain 3-oxoacyl-CoA + NADPH + H(+). The enzyme catalyses 17beta-estradiol + NAD(+) = estrone + NADH + H(+). It carries out the reaction 17beta-estradiol + NADP(+) = estrone + NADPH + H(+). The catalysed reaction is 3-oxooctadecanoyl-CoA + NADPH + H(+) = (3R)-hydroxyoctadecanoyl-CoA + NADP(+). It catalyses the reaction (7Z,10Z,13Z,16Z)-3-oxodocosatetraenoyl-CoA + NADPH + H(+) = (3R)-hydroxy-(7Z,10Z,13Z,16Z)-docosatetraenoyl-CoA + NADP(+). The enzyme catalyses 3-oxo-(7Z,10Z,13Z,16Z,19Z)-docosapentaenoyl-CoA + NADPH + H(+) = (3R)-hydroxy-(7Z,10Z,13Z,16Z,19Z)-docosapentaenoyl-CoA + NADP(+). It carries out the reaction (8Z,11Z,14Z)-3-oxoeicosatrienoyl-CoA + NADPH + H(+) = (3R)-hydroxy-(8Z,11Z,14Z)-eicosatrienoyl-CoA + NADP(+). It participates in lipid metabolism; fatty acid biosynthesis. Its pathway is steroid biosynthesis; estrogen biosynthesis. Its function is as follows. Catalyzes the second of the four reactions of the long-chain fatty acids elongation cycle. This endoplasmic reticulum-bound enzymatic process, allows the addition of two carbons to the chain of long- and very long-chain fatty acids/VLCFAs per cycle. This enzyme has a 3-ketoacyl-CoA reductase activity, reducing 3-ketoacyl-CoA to 3-hydroxyacyl-CoA, within each cycle of fatty acid elongation. Thereby, it may participate in the production of VLCFAs of different chain lengths that are involved in multiple biological processes as precursors of membrane lipids and lipid mediators. May also catalyze the transformation of estrone (E1) into estradiol (E2) and play a role in estrogen formation. This is Very-long-chain 3-oxoacyl-CoA reductase (hsd17b12) from Xenopus tropicalis (Western clawed frog).